The primary structure comprises 508 residues: Kinesin light chain (508 aa).

Residues 34–129 (IAEVQKDNEK…KKHLEFMASV (96 aa)) adopt a coiled-coil conformation. Positions 156–175 (DEENEDRHNMSPTPPSQFAN) are disordered. A Phosphothreonine modification is found at threonine 168. TPR repeat units follow at residues 186–219 (LRTL…LERT), 228–261 (ATML…RGKT), 270–303 (AATL…REKV), 312–345 (AKQL…YESK), 354–387 (AKTK…AHER), and 437–470 (TTTL…KKEA). Phosphothreonine is present on threonine 477. Phosphoserine occurs at positions 480 and 485. A disordered region spans residues 484 to 508 (TSNEKRRSKAIKEDLDFSEEKNAKP). A compositionally biased stretch (basic and acidic residues) spans 493 to 508 (AIKEDLDFSEEKNAKP).

Belongs to the kinesin light chain family. In terms of assembly, oligomeric complex composed of two heavy chains and two light chains. In terms of tissue distribution, ubiquitous.

Its subcellular location is the cytoplasm. It localises to the cytoskeleton. In terms of biological role, kinesin is a microtubule-associated force-producing protein that may play a role in organelle transport. The light chain may function in coupling of cargo to the heavy chain or in the modulation of its ATPase activity. This chain is Kinesin light chain (Klc), found in Drosophila melanogaster (Fruit fly).